The sequence spans 204 residues: Urease accessory protein UreG (204 aa).

Gly-15–Thr-22 contacts GTP.

The protein belongs to the SIMIBI class G3E GTPase family. UreG subfamily. Homodimer. UreD, UreF and UreG form a complex that acts as a GTP-hydrolysis-dependent molecular chaperone, activating the urease apoprotein by helping to assemble the nickel containing metallocenter of UreC. The UreE protein probably delivers the nickel.

The protein resides in the cytoplasm. Facilitates the functional incorporation of the urease nickel metallocenter. This process requires GTP hydrolysis, probably effectuated by UreG. In Methylobacterium nodulans (strain LMG 21967 / CNCM I-2342 / ORS 2060), this protein is Urease accessory protein UreG.